The sequence spans 246 residues: 1-(5-phosphoribosyl)-5-[(5-phosphoribosylamino)methylideneamino] imidazole-4-carboxamide isomerase (246 aa).

D8 functions as the Proton acceptor in the catalytic mechanism. Catalysis depends on D130, which acts as the Proton donor.

The protein belongs to the HisA/HisF family.

It localises to the cytoplasm. It catalyses the reaction 1-(5-phospho-beta-D-ribosyl)-5-[(5-phospho-beta-D-ribosylamino)methylideneamino]imidazole-4-carboxamide = 5-[(5-phospho-1-deoxy-D-ribulos-1-ylimino)methylamino]-1-(5-phospho-beta-D-ribosyl)imidazole-4-carboxamide. The protein operates within amino-acid biosynthesis; L-histidine biosynthesis; L-histidine from 5-phospho-alpha-D-ribose 1-diphosphate: step 4/9. This is 1-(5-phosphoribosyl)-5-[(5-phosphoribosylamino)methylideneamino] imidazole-4-carboxamide isomerase from Shigella dysenteriae serotype 1 (strain Sd197).